The following is a 274-amino-acid chain: Diaminopimelate epimerase (274 aa).

Substrate-binding residues include Asn11, Gln44, and Asn64. The active-site Proton donor is Cys73. Substrate-binding positions include 74-75 (GN), Asn157, Asn190, and 208-209 (ER). Cys217 functions as the Proton acceptor in the catalytic mechanism. 218 to 219 (GS) serves as a coordination point for substrate.

Belongs to the diaminopimelate epimerase family. Homodimer.

Its subcellular location is the cytoplasm. The enzyme catalyses (2S,6S)-2,6-diaminopimelate = meso-2,6-diaminopimelate. Its pathway is amino-acid biosynthesis; L-lysine biosynthesis via DAP pathway; DL-2,6-diaminopimelate from LL-2,6-diaminopimelate: step 1/1. Functionally, catalyzes the stereoinversion of LL-2,6-diaminopimelate (L,L-DAP) to meso-diaminopimelate (meso-DAP), a precursor of L-lysine and an essential component of the bacterial peptidoglycan. This chain is Diaminopimelate epimerase, found in Escherichia coli O6:H1 (strain CFT073 / ATCC 700928 / UPEC).